The following is a 121-amino-acid chain: Small ribosomal subunit protein uS13 (121 aa).

The disordered stretch occupies residues 93–121; it reads KGLPLRGQKTKTNARTRKGPKKTIANKKK.

The protein belongs to the universal ribosomal protein uS13 family. Part of the 30S ribosomal subunit. Forms a loose heterodimer with protein S19. Forms two bridges to the 50S subunit in the 70S ribosome.

In terms of biological role, located at the top of the head of the 30S subunit, it contacts several helices of the 16S rRNA. In the 70S ribosome it contacts the 23S rRNA (bridge B1a) and protein L5 of the 50S subunit (bridge B1b), connecting the 2 subunits; these bridges are implicated in subunit movement. Contacts the tRNAs in the A and P-sites. The sequence is that of Small ribosomal subunit protein uS13 from Clostridium perfringens (strain ATCC 13124 / DSM 756 / JCM 1290 / NCIMB 6125 / NCTC 8237 / Type A).